The following is a 254-amino-acid chain: Zinc import ATP-binding protein ZnuC (254 aa).

In terms of domain architecture, ABC transporter spans 5-221; that stretch reads ICAADLSVSH…PAYRALFGSE (217 aa). 38–45 is a binding site for ATP; sequence GPNGSGKS. Basic and acidic residues predominate over residues 234–245; the sequence is DHDHDHVAEGHR. Residues 234 to 254 are disordered; sequence DHDHDHVAEGHRHGPACAHPH.

The protein belongs to the ABC transporter superfamily. Zinc importer (TC 3.A.1.15.5) family. The complex is composed of two ATP-binding proteins (ZnuC), two transmembrane proteins (ZnuB) and a solute-binding protein (ZnuA).

It localises to the cell inner membrane. The enzyme catalyses Zn(2+)(out) + ATP(in) + H2O(in) = Zn(2+)(in) + ADP(in) + phosphate(in) + H(+)(in). Functionally, part of the ABC transporter complex ZnuABC involved in zinc import. Responsible for energy coupling to the transport system. The protein is Zinc import ATP-binding protein ZnuC of Paracoccus denitrificans (strain Pd 1222).